The chain runs to 890 residues: MSKDYDYRSIEAAAQADWEGAQVYQVAENAVDAQGKKKSKYYACSMLPYPSGKLHMGHVRNYTINDVMARQLRMQGYNVLMPMGWDAFGMPAENAAIQNKVPPAKWTYDNIAYMKKQMAAMGLAIDWSREVATCNPDYYRWNQWLFLKMLEKGIAYRKTQVVNWDPIDQTVLANEQVIDGRGWRSGALVEKREIPGYYFNITAYAEPLLSGLDGLGWPERVKTMQQNWIGKSRGVRFAFKHEIADDYGNFIQDGLLYVFTTRADTIMGVTFCAVAAEHPLATKAAANNSALAAFIEKCKTGSVIEADLATQEKEGMFTGLYVTHPLTYEPVPVWVGNYVLMSYGDGAVMGVPAHDERDFAFALKYELPIKQVIALKDESPMFNATCWEDWYAQKDGVVCFNSAQFDGLSHEEAVSAVAKALEKLGIGDIKTSFRLRDWGISRQRYWGTPIPIIHCGDESNPGCGAVPVPEADLPVVLPEDCVPDGSGNPLNKRADFLSVKCPKCGKPARRETDTMDTFVDSSWYFMRYTGPNAKTMVDERNEYWMPMDQYIGGIEHAILHLLYARFWTKIMRDLNLITFDEPFQNLLTQGMVLNETYYSEDASGKKTWLNPLDVELDLDEKGRPKGAKLIGDTLNTPVVVGGVEKMSKSKNNGVDPQALIDEYGADTARLFVMFAAPPEQQLEWSGAGVDGASRFLRRVWMYFSGQASALRDASDSLPSNLNDAEKELRREVHTILKQANFDYQRRQYNTVVSAAMKMLNILEPIKLDQNAAISAPVLRECLSILLRVLYPVVPHLTHVLWKEVGYAKTMGPLLDAPWPTVDEATLVQTEITLMLQINGKLRGDIKVPADANKEQVEALALQSEPAQKALNGGAPKKVIVVPGRLVNIVA.

A 'HIGH' region motif is present at residues 48-58 (PYPSGKLHMGH). The 'KMSKS' region motif lies at 645 to 649 (KMSKS). Residue lysine 648 participates in ATP binding.

It belongs to the class-I aminoacyl-tRNA synthetase family.

It is found in the cytoplasm. It carries out the reaction tRNA(Leu) + L-leucine + ATP = L-leucyl-tRNA(Leu) + AMP + diphosphate. The protein is Leucine--tRNA ligase of Polynucleobacter necessarius subsp. necessarius (strain STIR1).